The sequence spans 354 residues: COP9 signalosome complex subunit 5 (354 aa).

The 138-residue stretch at 56–193 (VLVSSIALVK…IGAFRTYPKD (138 aa)) folds into the MPN domain. 3 residues coordinate Zn(2+): His139, His141, and Asp152. Residues 139 to 152 (HSHPGYGCWLSGID) carry the JAMM motif motif. The tract at residues 193–212 (DYKPPKKATKQNQDQSVPLS) is disordered.

It belongs to the peptidase M67A family. CSN5 subfamily. Component of the COP9 signalosome (CSN) complex.

It localises to the cytoplasm. The protein localises to the nucleus. Its function is as follows. Catalytic Component of the COP9 signalosome (CSN) complex that acts as an regulator of the ubiquitin (Ubl) conjugation pathway by mediating the deneddylation of the cullin subunit of SCF-type E3 ubiquitin-protein ligase complexes. In Yarrowia lipolytica (strain CLIB 122 / E 150) (Yeast), this protein is COP9 signalosome complex subunit 5 (RRI1).